The following is a 384-amino-acid chain: Acetylornithine aminotransferase (384 aa).

Pyridoxal 5'-phosphate-binding positions include 94 to 95 (GT) and Phe-121. N(2)-acetyl-L-ornithine is bound at residue Arg-124. 206-209 (DEVQ) contacts pyridoxal 5'-phosphate. Lys-235 is subject to N6-(pyridoxal phosphate)lysine. Residue Ser-263 participates in N(2)-acetyl-L-ornithine binding. Thr-264 contributes to the pyridoxal 5'-phosphate binding site.

Belongs to the class-III pyridoxal-phosphate-dependent aminotransferase family. ArgD subfamily. In terms of assembly, homodimer. It depends on pyridoxal 5'-phosphate as a cofactor.

The protein resides in the cytoplasm. The catalysed reaction is N(2)-acetyl-L-ornithine + 2-oxoglutarate = N-acetyl-L-glutamate 5-semialdehyde + L-glutamate. It functions in the pathway amino-acid biosynthesis; L-arginine biosynthesis; N(2)-acetyl-L-ornithine from L-glutamate: step 4/4. In Listeria innocua serovar 6a (strain ATCC BAA-680 / CLIP 11262), this protein is Acetylornithine aminotransferase.